The following is a 475-amino-acid chain: Aspartyl/glutamyl-tRNA(Asn/Gln) amidotransferase subunit B (475 aa).

Belongs to the GatB/GatE family. GatB subfamily. Heterotrimer of A, B and C subunits.

The enzyme catalyses L-glutamyl-tRNA(Gln) + L-glutamine + ATP + H2O = L-glutaminyl-tRNA(Gln) + L-glutamate + ADP + phosphate + H(+). It catalyses the reaction L-aspartyl-tRNA(Asn) + L-glutamine + ATP + H2O = L-asparaginyl-tRNA(Asn) + L-glutamate + ADP + phosphate + 2 H(+). Its function is as follows. Allows the formation of correctly charged Asn-tRNA(Asn) or Gln-tRNA(Gln) through the transamidation of misacylated Asp-tRNA(Asn) or Glu-tRNA(Gln) in organisms which lack either or both of asparaginyl-tRNA or glutaminyl-tRNA synthetases. The reaction takes place in the presence of glutamine and ATP through an activated phospho-Asp-tRNA(Asn) or phospho-Glu-tRNA(Gln). This chain is Aspartyl/glutamyl-tRNA(Asn/Gln) amidotransferase subunit B, found in Bacillus cereus (strain ZK / E33L).